The chain runs to 510 residues: Inositol-3-phosphate synthase (510 aa).

Residues G70, G71, N72, N73, D143, I180, Q190, R193, T230, A231, N232, T233, G281, S282, D306, S309, N340, N341, D342, K355, G393, D394, D422, and S423 each contribute to the NAD(+) site.

This sequence belongs to the myo-inositol 1-phosphate synthase family. Requires NAD(+) as cofactor.

It localises to the cytoplasm. The protein localises to the cytosol. Its subcellular location is the nucleus. It catalyses the reaction D-glucose 6-phosphate = 1D-myo-inositol 3-phosphate. It participates in polyol metabolism; myo-inositol biosynthesis; myo-inositol from D-glucose 6-phosphate: step 1/2. Its function is as follows. Key enzyme in myo-inositol biosynthesis pathway that catalyzes the conversion of glucose 6-phosphate to 1-myo-inositol 1-phosphate in a NAD-dependent manner. This chain is Inositol-3-phosphate synthase, found in Nicotiana tabacum (Common tobacco).